The sequence spans 133 residues: Profilin-2 (133 aa).

C13 and C117 are disulfide-bonded. An Involved in PIP2 interaction motif is present at residues 83 to 99 (AVIRGKKGSGGITIKKT). Phosphothreonine is present on T113.

This sequence belongs to the profilin family. In terms of assembly, occurs in many kinds of cells as a complex with monomeric actin in a 1:1 ratio. In terms of processing, phosphorylated by MAP kinases.

Its subcellular location is the cytoplasm. The protein localises to the cytoskeleton. Functionally, binds to actin and affects the structure of the cytoskeleton. At high concentrations, profilin prevents the polymerization of actin, whereas it enhances it at low concentrations. This Betula pendula (European white birch) protein is Profilin-2.